Here is a 478-residue protein sequence, read N- to C-terminus: Trigger factor (478 aa).

Residues 1 to 41 (MAELADAPDLGSGARKGVRVRLPPPAPHKNGGKNESRGSGQ) are disordered. The region spanning 197 to 279 (GDMLVVEYEV…IKEIKKKVLP (83 aa)) is the PPIase FKBP-type domain. A compositionally biased stretch (basic and acidic residues) spans 455–472 (VEQKQEEEKKEEKEEVKN). Residues 455-478 (VEQKQEEEKKEEKEEVKNESQGNT) are disordered.

This sequence belongs to the FKBP-type PPIase family. Tig subfamily.

It is found in the cytoplasm. It carries out the reaction [protein]-peptidylproline (omega=180) = [protein]-peptidylproline (omega=0). In terms of biological role, involved in protein export. Acts as a chaperone by maintaining the newly synthesized protein in an open conformation. Functions as a peptidyl-prolyl cis-trans isomerase. The polypeptide is Trigger factor (Aquifex aeolicus (strain VF5)).